Reading from the N-terminus, the 596-residue chain is NADH-quinone oxidoreductase subunit C/D (596 aa).

The NADH dehydrogenase I subunit C stretch occupies residues 1 to 186; the sequence is MMNDNKYIHI…PAFTLTRKKE (186 aa). An NADH dehydrogenase I subunit D region spans residues 210-596; it reads DFMFLNLGPN…IDFVMSDVDR (387 aa).

The protein in the N-terminal section; belongs to the complex I 30 kDa subunit family. In the C-terminal section; belongs to the complex I 49 kDa subunit family. In terms of assembly, NDH-1 is composed of 13 different subunits. Subunits NuoB, CD, E, F, and G constitute the peripheral sector of the complex.

The protein resides in the cell inner membrane. It catalyses the reaction a quinone + NADH + 5 H(+)(in) = a quinol + NAD(+) + 4 H(+)(out). NDH-1 shuttles electrons from NADH, via FMN and iron-sulfur (Fe-S) centers, to quinones in the respiratory chain. The immediate electron acceptor for the enzyme in this species is believed to be ubiquinone. Couples the redox reaction to proton translocation (for every two electrons transferred, four hydrogen ions are translocated across the cytoplasmic membrane), and thus conserves the redox energy in a proton gradient. This is NADH-quinone oxidoreductase subunit C/D from Blochmanniella floridana.